The chain runs to 629 residues: tRNA uridine 5-carboxymethylaminomethyl modification enzyme MnmG (629 aa).

FAD contacts are provided by residues G13–G18, V125, and S180. G273–F287 serves as a coordination point for NAD(+). Q370 provides a ligand contact to FAD.

It belongs to the MnmG family. Homodimer. Heterotetramer of two MnmE and two MnmG subunits. The cofactor is FAD.

The protein resides in the cytoplasm. NAD-binding protein involved in the addition of a carboxymethylaminomethyl (cmnm) group at the wobble position (U34) of certain tRNAs, forming tRNA-cmnm(5)s(2)U34. This chain is tRNA uridine 5-carboxymethylaminomethyl modification enzyme MnmG, found in Enterobacter sp. (strain 638).